Consider the following 177-residue polypeptide: R-phycoerythrin beta chain (177 aa).

Phycourobilin is bound by residues cysteine 50 and cysteine 61. Asparagine 72 is modified (N4-methylasparagine). (2R,3E)-phycoerythrobilin is bound by residues cysteine 82 and cysteine 158.

It belongs to the phycobiliprotein family. As to quaternary structure, heterodimer of an alpha and a beta chain. Contains two covalently linked phycoerythrobilin chromophores and one covalently linked phycourobilin chromophore.

Its subcellular location is the plastid. The protein resides in the chloroplast thylakoid membrane. Functionally, light-harvesting photosynthetic bile pigment-protein from the phycobiliprotein complex. The polypeptide is R-phycoerythrin beta chain (cpeB) (Pyropia yezoensis (Susabi-nori)).